We begin with the raw amino-acid sequence, 97 residues long: HssA/B-like protein 38 (97 aa).

A disordered region spans residues 1–29; the sequence is MTLFSSISSISNPMTSSKSSISSFGSGTS.

It belongs to the hssA/B family.

This chain is HssA/B-like protein 38 (hssl38), found in Dictyostelium discoideum (Social amoeba).